We begin with the raw amino-acid sequence, 456 residues long: Amino acid transporter AVT6B (456 aa).

The next 11 membrane-spanning stretches (helical) occupy residues 37–57 (FSGA…MALP), 58–78 (ATMK…MAFL), 118–138 (ILVS…DVLA), 164–184 (TFVL…FKRI), 191–211 (SAIS…ITII), 236–256 (LFTV…VHSI), 273–293 (ALAM…LLFG), 328–348 (LMLV…GLIF), 365–385 (SITA…PSIW), 388–408 (FQFT…AAVI), and 423–443 (IAIC…YSDA).

It belongs to the amino acid/polyamine transporter 2 family. Amino acid/auxin permease (AAAP) (TC 2.A.18.6) subfamily.

The protein localises to the membrane. This Arabidopsis thaliana (Mouse-ear cress) protein is Amino acid transporter AVT6B.